The following is a 613-amino-acid chain: Cysteine--tRNA ligase (613 aa).

Residues 1–130 are disordered; sequence MSAGAGTPRR…TRGGVARSGN (130 aa). A run of 6 repeats spans residues 36 to 49, 50 to 63, 64 to 77, 78 to 91, 92 to 105, and 106 to 119. Residues 36 to 119 are 6 X 14 AA tandem repeats of P-[TA]-R-G-D-K-K-R-A-[RP]-R-[PL]-G-V; that stretch reads PTRGDKKRAR…DKKRARRPGV (84 aa). A cysteinyl-tRNA synthetase region spans residues 148–613; sequence VTIRLYDTSA…QGPRWSLGSR (466 aa). C176 contacts Zn(2+). Positions 178–188 match the 'HIGH' region motif; that stretch reads ATVQAAPHIGH. Zn(2+) is bound by residues C355, H380, and E384. Positions 411–415 match the 'KMSKS' region motif; the sequence is KMSKS. ATP is bound at residue K414.

Belongs to the class-I aminoacyl-tRNA synthetase family. In terms of assembly, monomer. The cofactor is Zn(2+).

The protein resides in the cytoplasm. The catalysed reaction is tRNA(Cys) + L-cysteine + ATP = L-cysteinyl-tRNA(Cys) + AMP + diphosphate. The sequence is that of Cysteine--tRNA ligase from Streptomyces coelicolor (strain ATCC BAA-471 / A3(2) / M145).